A 371-amino-acid chain; its full sequence is tRNA (guanine(26)-N(2))-dimethyltransferase (371 aa).

The Trm1 methyltransferase domain occupies 1 to 370; the sequence is MDVSEGGVTV…GGLAEVEAAV (370 aa). Positions 36, 66, 81, 107, and 108 each coordinate S-adenosyl-L-methionine. Residues Cys-238, Cys-241, Cys-258, and Cys-261 each contribute to the Zn(2+) site.

It belongs to the class I-like SAM-binding methyltransferase superfamily. Trm1 family.

It carries out the reaction guanosine(26) in tRNA + 2 S-adenosyl-L-methionine = N(2)-dimethylguanosine(26) in tRNA + 2 S-adenosyl-L-homocysteine + 2 H(+). In terms of biological role, dimethylates a single guanine residue at position 26 of a number of tRNAs using S-adenosyl-L-methionine as donor of the methyl groups. This chain is tRNA (guanine(26)-N(2))-dimethyltransferase, found in Halobacterium salinarum (strain ATCC 700922 / JCM 11081 / NRC-1) (Halobacterium halobium).